The sequence spans 229 residues: PKHD-type hydroxylase BBta_3541 (229 aa).

One can recognise a Fe2OG dioxygenase domain in the interval 78-180 (QIFPPLFNRY…RVASFFWMQS (103 aa)). Residues His-98, Asp-100, and His-161 each contribute to the Fe cation site. Arg-171 contributes to the 2-oxoglutarate binding site.

Requires Fe(2+) as cofactor. The cofactor is L-ascorbate.

In Bradyrhizobium sp. (strain BTAi1 / ATCC BAA-1182), this protein is PKHD-type hydroxylase BBta_3541.